A 197-amino-acid polypeptide reads, in one-letter code: Phosphoheptose isomerase (197 aa).

In terms of domain architecture, SIS spans 36–197; it reads MTASLMNNGK…IDCLLLGVEE (162 aa). Substrate is bound at residue 51-53; the sequence is NGG. 2 residues coordinate Zn(2+): His-60 and Glu-64. Substrate-binding positions include Glu-64, 93–94, 119–121, Ser-124, and Gln-174; these read ND and STS. Zn(2+) is bound by residues Gln-174 and His-182.

Belongs to the SIS family. GmhA subfamily. Homotetramer. The cofactor is Zn(2+).

Its subcellular location is the cytoplasm. It carries out the reaction 2 D-sedoheptulose 7-phosphate = D-glycero-alpha-D-manno-heptose 7-phosphate + D-glycero-beta-D-manno-heptose 7-phosphate. Its pathway is carbohydrate biosynthesis; D-glycero-D-manno-heptose 7-phosphate biosynthesis; D-glycero-alpha-D-manno-heptose 7-phosphate and D-glycero-beta-D-manno-heptose 7-phosphate from sedoheptulose 7-phosphate: step 1/1. Catalyzes the isomerization of sedoheptulose 7-phosphate in D-glycero-D-manno-heptose 7-phosphate. In Azoarcus sp. (strain BH72), this protein is Phosphoheptose isomerase.